The following is a 304-amino-acid chain: uncharacterized protein (304 aa).

Transmembrane regions (helical) follow at residues 5–25, 42–62, 68–88, 96–116, 120–140, 150–170, 178–198, 215–235, 245–265, and 268–288; these read TIILLLFIIVSITWGTTFIAI, FLLASFFLIFLCFYTKTPLLF, IFQLIICIFYFSLPFLLILYG, IASVIFAIMPIIVLFLSFIFF, LYFFQFIGLVLAIIFLSIILF, TIKGVIALLLAMTSHAIIYLY, ISILTFNALPSLLSGLFFLVI, ILATFYLSYFSGVFGILSYFY, ASTIFFIFPIINLMLEEFVWG, and IGIDQLQLIVFLMSSILITIF. 2 consecutive EamA domains span residues 16 to 140 and 162 to 288; these read ITWG…IILF and TSHA…ITIF.

It belongs to the EamA transporter family.

The protein resides in the cell membrane. This is an uncharacterized protein from Buchnera aphidicola subsp. Schlechtendalia chinensis.